Consider the following 352-residue polypeptide: Heat-inducible transcription repressor HrcA (352 aa).

It belongs to the HrcA family.

Functionally, negative regulator of class I heat shock genes (grpE-dnaK-dnaJ and groELS operons). Prevents heat-shock induction of these operons. The sequence is that of Heat-inducible transcription repressor HrcA from Lactobacillus gasseri (strain ATCC 33323 / DSM 20243 / BCRC 14619 / CIP 102991 / JCM 1131 / KCTC 3163 / NCIMB 11718 / NCTC 13722 / AM63).